The primary structure comprises 149 residues: MVFNVVEIQKILPHRYPFLLVDRITHLEKGSYIEGYKNVSISEPVFQGHFPDHPIYPGVMIIEGMAQAGGVLAFESMDNATQEEIANKVVYFMSIDKAKFRSPVTPGDQLVYKLNVIKNKGAIWQLDAKAYVDDKLVAEAELKAMIVDK.

The active site involves H49.

Belongs to the thioester dehydratase family. FabZ subfamily.

The protein localises to the cytoplasm. It catalyses the reaction a (3R)-hydroxyacyl-[ACP] = a (2E)-enoyl-[ACP] + H2O. Functionally, involved in unsaturated fatty acids biosynthesis. Catalyzes the dehydration of short chain beta-hydroxyacyl-ACPs and long chain saturated and unsaturated beta-hydroxyacyl-ACPs. This chain is 3-hydroxyacyl-[acyl-carrier-protein] dehydratase FabZ, found in Sulfurovum sp. (strain NBC37-1).